Consider the following 130-residue polypeptide: ATP synthase epsilon chain, chloroplastic (130 aa).

It belongs to the ATPase epsilon chain family. As to quaternary structure, F-type ATPases have 2 components, CF(1) - the catalytic core - and CF(0) - the membrane proton channel. CF(1) has five subunits: alpha(3), beta(3), gamma(1), delta(1), epsilon(1). CF(0) has three main subunits: a, b and c.

The protein resides in the plastid. Its subcellular location is the chloroplast thylakoid membrane. Its function is as follows. Produces ATP from ADP in the presence of a proton gradient across the membrane. In Tupiella akineta (Green alga), this protein is ATP synthase epsilon chain, chloroplastic.